We begin with the raw amino-acid sequence, 332 residues long: Ketol-acid reductoisomerase (NADP(+)) (332 aa).

A KARI N-terminal Rossmann domain is found at Ala-2–Thr-182. Residues Tyr-25 to Gln-28, Ser-51, Ser-53, and Asp-83 to Gln-86 each bind NADP(+). His-108 is a catalytic residue. Gly-134 is a binding site for NADP(+). Positions Thr-183–Leu-327 constitute a KARI C-terminal knotted domain. Mg(2+) contacts are provided by Asp-191, Glu-195, Glu-227, and Glu-231. Residue Ser-252 coordinates substrate.

This sequence belongs to the ketol-acid reductoisomerase family. Mg(2+) serves as cofactor.

It catalyses the reaction (2R)-2,3-dihydroxy-3-methylbutanoate + NADP(+) = (2S)-2-acetolactate + NADPH + H(+). It carries out the reaction (2R,3R)-2,3-dihydroxy-3-methylpentanoate + NADP(+) = (S)-2-ethyl-2-hydroxy-3-oxobutanoate + NADPH + H(+). It functions in the pathway amino-acid biosynthesis; L-isoleucine biosynthesis; L-isoleucine from 2-oxobutanoate: step 2/4. Its pathway is amino-acid biosynthesis; L-valine biosynthesis; L-valine from pyruvate: step 2/4. Involved in the biosynthesis of branched-chain amino acids (BCAA). Catalyzes an alkyl-migration followed by a ketol-acid reduction of (S)-2-acetolactate (S2AL) to yield (R)-2,3-dihydroxy-isovalerate. In the isomerase reaction, S2AL is rearranged via a Mg-dependent methyl migration to produce 3-hydroxy-3-methyl-2-ketobutyrate (HMKB). In the reductase reaction, this 2-ketoacid undergoes a metal-dependent reduction by NADPH to yield (R)-2,3-dihydroxy-isovalerate. The polypeptide is Ketol-acid reductoisomerase (NADP(+)) (Sulfurihydrogenibium sp. (strain YO3AOP1)).